Consider the following 263-residue polypeptide: GTP cyclohydrolase FolE2 (263 aa).

The protein belongs to the GTP cyclohydrolase IV family.

The catalysed reaction is GTP + H2O = 7,8-dihydroneopterin 3'-triphosphate + formate + H(+). Its pathway is cofactor biosynthesis; 7,8-dihydroneopterin triphosphate biosynthesis; 7,8-dihydroneopterin triphosphate from GTP: step 1/1. In terms of biological role, converts GTP to 7,8-dihydroneopterin triphosphate. This is GTP cyclohydrolase FolE2 from Nitrosospira multiformis (strain ATCC 25196 / NCIMB 11849 / C 71).